The following is a 63-amino-acid chain: Small ribosomal subunit protein eS31 (63 aa).

Residues C34, C37, C53, and C56 each contribute to the Zn(2+) site. The C4-type zinc-finger motif lies at 34 to 56 (CPKCGSVMAFHREPVPRWHCGKC).

This sequence belongs to the eukaryotic ribosomal protein eS31 family. In terms of assembly, part of the 30S ribosomal subunit. It depends on Zn(2+) as a cofactor.

The chain is Small ribosomal subunit protein eS31 from Pyrobaculum neutrophilum (strain DSM 2338 / JCM 9278 / NBRC 100436 / V24Sta) (Thermoproteus neutrophilus).